Consider the following 261-residue polypeptide: MTHQTHAYHMVNPSPWPLTGALSALLMTSGLIMWFHFNSTTLLMLGLTTNMLTMYQWWRDIIRESTFQGHHTPNVQKGLRYGMILFIISEVLFFTGFFWAFYHSSLAPTPELGGCWPPTGIHPLNPLEVPLLNTSVLLASGVSITWAHHSLMEGNRNHMLQALFITIALGVYFTLLQASEYYEAPFTISDGVYGSTFFVATGFHGLHVIIGSTFLIVCFFRQLKFHFTSSHHFGFEAAAWYWHFVDVVWLFLYVSIYWWGS.

Residues 1–15 (MTHQTHAYHMVNPSP) are Mitochondrial matrix-facing. The helical transmembrane segment at 16-34 (WPLTGALSALLMTSGLIMW) threads the bilayer. At 35–40 (FHFNST) the chain is on the mitochondrial intermembrane side. Residues 41-66 (TLLMLGLTTNMLTMYQWWRDIIREST) traverse the membrane as a helical segment. At 67–72 (FQGHHT) the chain is on the mitochondrial matrix side. A helical transmembrane segment spans residues 73–105 (PNVQKGLRYGMILFIISEVLFFTGFFWAFYHSS). Residues 106-128 (LAPTPELGGCWPPTGIHPLNPLE) lie on the Mitochondrial intermembrane side of the membrane. A helical membrane pass occupies residues 129 to 152 (VPLLNTSVLLASGVSITWAHHSLM). Residues 153 to 155 (EGN) lie on the Mitochondrial matrix side of the membrane. Residues 156–183 (RNHMLQALFITIALGVYFTLLQASEYYE) traverse the membrane as a helical segment. Residues 184-190 (APFTISD) lie on the Mitochondrial intermembrane side of the membrane. Residues 191–223 (GVYGSTFFVATGFHGLHVIIGSTFLIVCFFRQL) traverse the membrane as a helical segment. Residues 224-232 (KFHFTSSHH) are Mitochondrial matrix-facing. The helical transmembrane segment at 233 to 256 (FGFEAAAWYWHFVDVVWLFLYVSI) threads the bilayer. Residues 257-261 (YWWGS) lie on the Mitochondrial intermembrane side of the membrane.

This sequence belongs to the cytochrome c oxidase subunit 3 family. In terms of assembly, component of the cytochrome c oxidase (complex IV, CIV), a multisubunit enzyme composed of 14 subunits. The complex is composed of a catalytic core of 3 subunits MT-CO1, MT-CO2 and MT-CO3, encoded in the mitochondrial DNA, and 11 supernumerary subunits COX4I, COX5A, COX5B, COX6A, COX6B, COX6C, COX7A, COX7B, COX7C, COX8 and NDUFA4, which are encoded in the nuclear genome. The complex exists as a monomer or a dimer and forms supercomplexes (SCs) in the inner mitochondrial membrane with NADH-ubiquinone oxidoreductase (complex I, CI) and ubiquinol-cytochrome c oxidoreductase (cytochrome b-c1 complex, complex III, CIII), resulting in different assemblies (supercomplex SCI(1)III(2)IV(1) and megacomplex MCI(2)III(2)IV(2)).

It is found in the mitochondrion inner membrane. It carries out the reaction 4 Fe(II)-[cytochrome c] + O2 + 8 H(+)(in) = 4 Fe(III)-[cytochrome c] + 2 H2O + 4 H(+)(out). Component of the cytochrome c oxidase, the last enzyme in the mitochondrial electron transport chain which drives oxidative phosphorylation. The respiratory chain contains 3 multisubunit complexes succinate dehydrogenase (complex II, CII), ubiquinol-cytochrome c oxidoreductase (cytochrome b-c1 complex, complex III, CIII) and cytochrome c oxidase (complex IV, CIV), that cooperate to transfer electrons derived from NADH and succinate to molecular oxygen, creating an electrochemical gradient over the inner membrane that drives transmembrane transport and the ATP synthase. Cytochrome c oxidase is the component of the respiratory chain that catalyzes the reduction of oxygen to water. Electrons originating from reduced cytochrome c in the intermembrane space (IMS) are transferred via the dinuclear copper A center (CU(A)) of subunit 2 and heme A of subunit 1 to the active site in subunit 1, a binuclear center (BNC) formed by heme A3 and copper B (CU(B)). The BNC reduces molecular oxygen to 2 water molecules using 4 electrons from cytochrome c in the IMS and 4 protons from the mitochondrial matrix. The polypeptide is Cytochrome c oxidase subunit 3 (MT-CO3) (Litocranius walleri (Gerenuk)).